Reading from the N-terminus, the 614-residue chain is ATP-dependent zinc metalloprotease FtsH (614 aa).

Residues 1–5 (MLPIR) are Cytoplasmic-facing. Residues 6–26 (WFLALLAVFLAVAGLDLWFSQ) traverse the membrane as a helical segment. The Periplasmic segment spans residues 27-127 (TGARPSSATG…AVSARERTAS (101 aa)). A helical membrane pass occupies residues 128-148 (IVHAIVHPLGLITLIVGILFV). At 149-614 (VQRYAGRFTA…AQHPPSALAG (466 aa)) the chain is on the cytoplasmic side. 214–221 (GPPGTGKT) serves as a coordination point for ATP. His-436 contacts Zn(2+). The active site involves Glu-437. Zn(2+)-binding residues include His-440 and Asp-513.

It in the central section; belongs to the AAA ATPase family. In the C-terminal section; belongs to the peptidase M41 family. In terms of assembly, homohexamer. Zn(2+) is required as a cofactor.

It is found in the cell inner membrane. In terms of biological role, acts as a processive, ATP-dependent zinc metallopeptidase for both cytoplasmic and membrane proteins. Plays a role in the quality control of integral membrane proteins. The sequence is that of ATP-dependent zinc metalloprotease FtsH from Opitutus terrae (strain DSM 11246 / JCM 15787 / PB90-1).